We begin with the raw amino-acid sequence, 788 residues long: MGIELLCLFFLCLGRNDHVQGGCAVGGAETCEDCLLIGPQCAWCSQENFTHLSGVGERCDTPANLLAKGCQLTFIENPVSQVEILTNKPLSIGRQKNSSDIVQISPQSLALKLRPGLEQTLQVQVRQTEDYPVDLYYLMDLSASMDDDLNTIKELGSLLSKEMSKLTSNFRLGFGSFVEKPISPFMKTTPEEIANPCSSIPYFCLPTFGFKHILPLTNDAERFNEIVKNQKISANIDTPEGGFDAIMQAAVCKEKIGWRNDSLHLLVFVSDADSHFGMDSKLAGIVIPNDGLCHLDSKNEYSMSTILEYPTIGQLIDKLVQNNVLLIFAVTQEQVHLYENYAKLIPGATVGVLQKDSGNILQLIISAYEELRSEVELEVLGDTEGLNLSFTAICNTGIPVPHQKKCSHMKVGDTASFNVTVSLPNCERRSRHIILKPVGLGDALEILVSPECSCDCQKEVEVNSSKCNNGNGSFQCGVCACHPGHMGHHCECGEDTLSTESCKEAPGRPSCSGRGDCYCGQCVCHLSPYGNIYGPYCQCDNFSCVRHKGLLCGDNGDCDCGECVCRSGWTGEYCNCTTSTDPCVSEDGILCSGRGDCVCGKCICTNPGASGPTCERCPTCGDPCNSKRSCIECYLSADGQAQEECVDKCKLAGATINEEEDFSKDSFVSCSLQGENECLITFLLTTDNEGKTVIHSINEKDCPKPPNIPMIMLGVSLAILLIGVVLLCIWKLLVSFHDRKEVAKFEAERSKAKWQTGTNPLYRGSTSTFKNVTYKHKEKQKVDLSTDG.

The N-terminal stretch at 1 to 21 is a signal peptide; it reads MGIELLCLFFLCLGRNDHVQG. Residues 22–71 enclose the PSI domain; it reads GCAVGGAETCEDCLLIGPQCAWCSQENFTHLSGVGERCDTPANLLAKGCQ. The Extracellular portion of the chain corresponds to 22–709; sequence GCAVGGAETC…KDCPKPPNIP (688 aa). Cystine bridges form between Cys-23–Cys-41, Cys-31–Cys-454, Cys-34–Cys-59, Cys-44–Cys-70, Cys-197–Cys-204, Cys-252–Cys-293, Cys-394–Cys-406, Cys-426–Cys-452, Cys-456–Cys-476, Cys-467–Cys-479, Cys-481–Cys-490, Cys-492–Cys-519, Cys-502–Cys-517, Cys-511–Cys-522, Cys-524–Cys-537, Cys-539–Cys-560, Cys-544–Cys-558, Cys-552–Cys-563, and Cys-565–Cys-574. N-linked (GlcNAc...) asparagine glycosylation is found at Asn-48 and Asn-97. The region spanning 131–371 is the VWFA domain; sequence YPVDLYYLMD…QLIISAYEEL (241 aa). Asp-140, Ser-142, and Ser-144 together coordinate Mg(2+). 4 residues coordinate Ca(2+): Ser-144, Asp-147, Asp-148, and Glu-179. 4 residues coordinate Ca(2+): Asn-235, Asp-237, Pro-239, and Glu-240. Glu-240 provides a ligand contact to Mg(2+). N-linked (GlcNAc...) asparagine glycosylation occurs at Asn-260. Positions 271 and 355 each coordinate Ca(2+). N-linked (GlcNAc...) asparagine glycosylation is present at Asn-387. A glycan (N-linked (GlcNAc...) asparagine) is linked at Asn-418. 4 consecutive I-EGF domains span residues 456–491, 492–538, 539–575, and 576–615; these read CQKE…HHCE, CGED…PYCQ, CDNF…EYCN, and CTTS…PTCE. N-linked (GlcNAc...) asparagine glycans are attached at residues Asn-463 and Asn-471. Asn-541 is a glycosylation site (N-linked (GlcNAc...) asparagine). A glycan (N-linked (GlcNAc...) asparagine) is linked at Asn-575. Cystine bridges form between Cys-576-Cys-599, Cys-583-Cys-597, Cys-591-Cys-602, Cys-604-Cys-614, Cys-617-Cys-620, Cys-624-Cys-670, Cys-630-Cys-649, Cys-633-Cys-645, and Cys-678-Cys-702. A helical transmembrane segment spans residues 710 to 730; it reads MIMLGVSLAILLIGVVLLCIW. Positions 731-758 are interaction with HAX1; that stretch reads KLLVSFHDRKEVAKFEAERSKAKWQTGT. At 731–788 the chain is on the cytoplasmic side; it reads KLLVSFHDRKEVAKFEAERSKAKWQTGTNPLYRGSTSTFKNVTYKHKEKQKVDLSTDG.

This sequence belongs to the integrin beta chain family. In terms of assembly, heterodimer of an alpha and a beta subunit. Interacts with FLNB. Interacts with HAX1. ITGAV:ITGB6 interacts with FBN1. ITGAV:ITGB6 interacts with TGFB1.

It localises to the cell membrane. Its subcellular location is the cell junction. The protein resides in the focal adhesion. Integrin alpha-V:beta-6 (ITGAV:ITGB6) is a receptor for fibronectin and cytotactin. It recognizes the sequence R-G-D in its ligands. ITGAV:ITGB6 acts as a receptor for fibrillin-1 (FBN1) and mediates R-G-D-dependent cell adhesion to FBN1. Integrin alpha-V:beta-6 (ITGAV:ITGB6) mediates R-G-D-dependent release of transforming growth factor beta-1 (TGF-beta-1) from regulatory Latency-associated peptide (LAP), thereby playing a key role in TGF-beta-1 activation. This chain is Integrin beta-6 (ITGB6), found in Bos taurus (Bovine).